We begin with the raw amino-acid sequence, 126 residues long: Small ribosomal subunit protein bS6 (126 aa).

The interval 99–126 (PLPAPRVVPGTEAPEPAQAAETPEPEAS) is disordered. A compositionally biased stretch (low complexity) spans 107–120 (PGTEAPEPAQAAET).

Belongs to the bacterial ribosomal protein bS6 family.

Functionally, binds together with bS18 to 16S ribosomal RNA. This is Small ribosomal subunit protein bS6 from Synechococcus sp. (strain CC9902).